The following is a 166-amino-acid chain: Probable RNA-binding protein EIF1AD (166 aa).

The region spanning 5–89 (TKRKHVVKEV…VKAEISFVLC (85 aa)) is the S1-like domain. The Nuclear localization signal signature appears at 6–12 (KRKHVVK). Position 33 is a phosphothreonine (threonine 33). The Nuclear localization signal motif lies at 56–65 (KYRKNIWIKR). The interval 99-166 (DGHWPEAFSQ…EEESEEEEAA (68 aa)) is disordered. Basic and acidic residues predominate over residues 110 to 119 (TEKDNNDRNR). 6 positions are modified to phosphoserine: serine 132, serine 136, serine 137, serine 138, serine 156, and serine 160. Acidic residues predominate over residues 156 to 166 (SEEESEEEEAA).

It belongs to the EIF1AD family. In terms of assembly, interacts with GAPDH and STAT1.

Its subcellular location is the nucleus. In terms of biological role, plays a role into cellular response to oxidative stress. Decreases cell proliferation. The protein is Probable RNA-binding protein EIF1AD (EIF1AD) of Bos taurus (Bovine).